We begin with the raw amino-acid sequence, 478 residues long: Dihydrolipoyl dehydrogenase (478 aa).

FAD-binding positions include 34–49 (EKYI…GGTC), Lys58, and Gly122. A disulfide bridge links Cys49 with Cys54. Residues 188–192 (GAGVI), Glu211, Val245, and 276–279 (AVGR) each bind NAD(+). Asp319 and Ala327 together coordinate FAD. The Proton acceptor role is filled by His451.

It belongs to the class-I pyridine nucleotide-disulfide oxidoreductase family. Homodimer. FAD is required as a cofactor.

It is found in the cytoplasm. The enzyme catalyses N(6)-[(R)-dihydrolipoyl]-L-lysyl-[protein] + NAD(+) = N(6)-[(R)-lipoyl]-L-lysyl-[protein] + NADH + H(+). Functionally, the branched-chain alpha-keto dehydrogenase complex catalyzes the overall conversion of alpha-keto acids to acyl-CoA and CO(2). It contains multiple copies of 3 enzymatic components: branched-chain alpha-keto acid decarboxylase (E1), lipoamide acyltransferase (E2) and lipoamide dehydrogenase (E3). Also acts in the glycine cleavage system. The protein is Dihydrolipoyl dehydrogenase (lpdG) of Pseudomonas aeruginosa (strain ATCC 15692 / DSM 22644 / CIP 104116 / JCM 14847 / LMG 12228 / 1C / PRS 101 / PAO1).